A 708-amino-acid polypeptide reads, in one-letter code: Kelch-like protein 11 (708 aa).

The signal sequence occupies residues 1–15 (MAAAAVAAAAAAAAA). Residues 47 to 70 (DFGPGPGISAMEASGGDPGPEAED) form a disordered region. Residues 94 to 170 (CDITLCFGGA…MYTGRIRVST (77 aa)) enclose the BTB domain. The BACK domain maps to 205–307 (CVAIHSLAHM…KPTYLTRHVK (103 aa)). Kelch repeat units lie at residues 360–407 (VIMV…VTES), 408–453 (YVYV…EVKG), 455–501 (LYSI…AIED), 503–556 (FVYI…VVNS), and 610–661 (DVFI…HVRI). At S465 the chain carries Phosphoserine.

Component of a cullin-RING-based BCR (BTB-CUL3-RBX1) E3 ubiquitin-protein ligase complex. Homodimer. Interacts with CUL3.

Functionally, component of a cullin-RING-based BCR (BTB-CUL3-RBX1) E3 ubiquitin-protein ligase complex that mediates the ubiquitination of target proteins, leading most often to their proteasomal degradation. The polypeptide is Kelch-like protein 11 (KLHL11) (Homo sapiens (Human)).